We begin with the raw amino-acid sequence, 240 residues long: Protein RoBo-1 (240 aa).

An N-terminal signal peptide occupies residues 1 to 26 (MSWFLVLKCLLTVCIISHLSVSSTES). Residue asparagine 42 is glycosylated (N-linked (GlcNAc...) asparagine). 5 disulfides stabilise this stretch: cysteine 47-cysteine 76, cysteine 81-cysteine 102, cysteine 103-cysteine 108, cysteine 127-cysteine 151, and cysteine 144-cysteine 171. Asparagine 153 carries N-linked (GlcNAc...) asparagine glycosylation.

The protein belongs to the CNF-like-inhibitor family. Post-translationally, N-glycosylated. In terms of tissue distribution, expressed abundantly in bone, including the lengthening growth plate where cartilage is remodeled into bone.

The protein localises to the secreted. May play a novel role in the growth or remodeling of bone. This chain is Protein RoBo-1, found in Rattus norvegicus (Rat).